The primary structure comprises 236 residues: Putative N-acetylmannosamine-6-phosphate 2-epimerase (236 aa).

It belongs to the NanE family.

The enzyme catalyses an N-acyl-D-glucosamine 6-phosphate = an N-acyl-D-mannosamine 6-phosphate. Its pathway is amino-sugar metabolism; N-acetylneuraminate degradation; D-fructose 6-phosphate from N-acetylneuraminate: step 3/5. In terms of biological role, converts N-acetylmannosamine-6-phosphate (ManNAc-6-P) to N-acetylglucosamine-6-phosphate (GlcNAc-6-P). In Listeria welshimeri serovar 6b (strain ATCC 35897 / DSM 20650 / CCUG 15529 / CIP 8149 / NCTC 11857 / SLCC 5334 / V8), this protein is Putative N-acetylmannosamine-6-phosphate 2-epimerase.